A 381-amino-acid chain; its full sequence is Probable serine/threonine-protein kinase PBL22 (381 aa).

A lipid anchor (S-palmitoyl cysteine) is attached at cysteine 3. Phosphothreonine is present on threonine 64. A Protein kinase domain is found at 75-351; the sequence is FREGNIIGKG…GDVVVAFEYI (277 aa). Residues 81 to 89 and lysine 103 contribute to the ATP site; that span reads IGKGGFGSV. The residue at position 148 (tyrosine 148) is a Phosphotyrosine. The active-site Proton acceptor is the aspartate 201. A Phosphoserine modification is found at serine 235. Phosphothreonine occurs at positions 236 and 241. Position 249 is a phosphotyrosine (tyrosine 249). The tract at residues 361–381 is disordered; the sequence is RRTARKSTDSNRLRRETKQSY.

The protein belongs to the protein kinase superfamily. Ser/Thr protein kinase family. Post-translationally, palmitoylation at Cys-3 and Cys-6 are required for plasma membrane location.

The protein resides in the cell membrane. It catalyses the reaction L-seryl-[protein] + ATP = O-phospho-L-seryl-[protein] + ADP + H(+). The enzyme catalyses L-threonyl-[protein] + ATP = O-phospho-L-threonyl-[protein] + ADP + H(+). In terms of biological role, may be involved in plant defense signaling. The sequence is that of Probable serine/threonine-protein kinase PBL22 from Arabidopsis thaliana (Mouse-ear cress).